We begin with the raw amino-acid sequence, 1196 residues long: Protein BRASSINOSTEROID INSENSITIVE 1 (1196 aa).

Positions 1 to 23 are cleaved as a signal peptide; it reads MKTFSSFFLSVTTLFFFSFFSLS. A Cys pair 1 motif is present at residues 62-69; it reads CTFDGVTC. 21 LRR repeats span residues 71 to 98, 99 to 121, 122 to 146, 148 to 169, 172 to 197, 199 to 221, 222 to 244, 245 to 268, 269 to 290, 291 to 314, 316 to 338, 339 to 363, 364 to 388, 390 to 413, 415 to 439, 441 to 463, 464 to 487, 488 to 511, 513 to 535, 536 to 559, and 561 to 583; these read DDKV…LLSL, TGLE…FKCS, ASLT…SLGS, SGLK…VSGG, LNSL…VLSD, CGEL…VSRC, VNLE…LGDC, SALQ…ISTC, TELK…PLPL, KSLQ…LSGA, DTLT…FFGS, CSLL…TLLK, MRGL…LTNL, ASLL…LCQN, KNTL…LSNC, ELVS…LGSL, SKLR…LMYV, KTLE…LSNC, NLNW…IGRL, ENLA…LGDC, and SLIW…MFKQ. An N-linked (GlcNAc...) asparagine glycan is attached at Asn-112. Asn-154 carries N-linked (GlcNAc...) asparagine glycosylation. The N-linked (GlcNAc...) asparagine glycan is linked to Asn-233. An N-linked (GlcNAc...) asparagine glycan is attached at Asn-275. 4 N-linked (GlcNAc...) asparagine glycosylation sites follow: Asn-351, Asn-387, Asn-401, and Asn-438. A glycan (N-linked (GlcNAc...) asparagine) is linked at Asn-510. N-linked (GlcNAc...) asparagine glycosylation is found at Asn-545 and Asn-573. Tyr-597 is a binding site for brassinolide. N-linked (GlcNAc...) asparagine glycosylation occurs at Asn-636. The tract at residues 640 to 642 is SERK1 binding; that stretch reads RVY. Brassinolide contacts are provided by Tyr-642 and Ser-647. An N-linked (GlcNAc...) asparagine glycan is attached at Asn-653. 4 LRR repeats span residues 653–677, 678–701, 702–725, and 727–750; these read NGSM…IGSM, PYLF…VGDL, RGLN…MSAL, and MLTE…QFET. Residue Asn-705 participates in brassinolide binding. The tract at residues 726–729 is SERK1 binding; sequence TMLT. A glycan (N-linked (GlcNAc...) asparagine) is linked at Asn-737. An SERK1 binding region spans residues 746 to 750; sequence GQFET. The Cys pair 2 signature appears at 763 to 770; that stretch reads CGYPLPRC. Residues 793-813 traverse the membrane as a helical segment; sequence AGSVAMGLLFSFVCIFGLILV. Phosphotyrosine is present on Tyr-831. Ser-838 is subject to Phosphoserine. 3 positions are modified to phosphothreonine: Thr-842, Thr-846, and Thr-851. The residue at position 858 (Ser-858) is a Phosphoserine. Thr-872 and Thr-880 each carry phosphothreonine. The 276-residue stretch at 883–1158 folds into the Protein kinase domain; that stretch reads FHNDSLIGSG…VQVMAMFKEI (276 aa). Phosphoserine is present on residues Ser-887 and Ser-891. Residues 889–897 and Lys-911 each bind ATP; that span reads IGSGGFGDV. Tyr-956 is modified (phosphotyrosine). ATP contacts are provided by residues 957 to 959 and 963 to 966; these read EFM and SLED. Position 981 is a phosphoserine (Ser-981). Position 982 is a phosphothreonine (Thr-982). The Proton acceptor role is filled by Asp-1009. ATP contacts are provided by residues 1009–1014 and Asp-1027; that span reads DMKSSN. The residue at position 1035 (Ser-1035) is a Phosphoserine. At Thr-1039 the chain carries Phosphothreonine. A phosphoserine mark is found at Ser-1042 and Ser-1044. 2 positions are modified to phosphothreonine: Thr-1045 and Thr-1049. At Tyr-1052 the chain carries Phosphotyrosine. A Phosphoserine modification is found at Ser-1060. Tyr-1072 bears the Phosphotyrosine mark. Phosphoserine occurs at positions 1166 and 1168. Phosphothreonine is present on Thr-1169. Phosphoserine is present on residues Ser-1172 and Ser-1179. Thr-1180 is subject to Phosphothreonine. Ser-1187 is modified (phosphoserine).

The protein belongs to the protein kinase superfamily. Ser/Thr protein kinase family. In terms of assembly, monomer or homodimer in the plasma membrane. Heterodimer with BAK1 in the endosomes. Interacts with SERK1 and TTL in a kinase-dependent manner. Bind to SERK1 in a brassinolide-dependent manner. Component of the SERK1 signaling complex, composed of KAPP, CDC48A, GRF6 or GRF7, SERK1, SERK2, SERK3/BAK1 and BRI1. Interacts with CDG1. No interactions with PSKR1 or CNGC17. Interacts with BIK1. Interacts with B'ALPHA, B'BETA, B'GAMMA and B'ETA. Interacts with BSK1 and BSK3. Interacts with BSK5, BSK6 and BSK11. Autophosphorylated on Tyr-831, Tyr-956 and maybe Tyr-1072. Phosphorylated on at least 12 sites, with a preference for Ser residues. Transphosphorylated on Ser-887 by SERK1 and on Ser-838, Thr-846, Ser-858 and Ser-1166 by BAK1. Phosphorylation on Ser-1166 enhances the kinase activity. Post-translationally, glycosylated. Expressed ubiquitously.

It localises to the cell membrane. Its subcellular location is the endosome membrane. It carries out the reaction L-seryl-[protein] + ATP = O-phospho-L-seryl-[protein] + ADP + H(+). The enzyme catalyses L-threonyl-[protein] + ATP = O-phospho-L-threonyl-[protein] + ADP + H(+). The catalysed reaction is L-tyrosyl-[protein] + ATP = O-phospho-L-tyrosyl-[protein] + ADP + H(+). With respect to regulation, activated by Ser and Thr phosphorylation. In terms of biological role, receptor with a dual specificity kinase activity acting on both serine/threonine- and tyrosine-containing substrates. Regulates, in response to brassinosteroid binding, a signaling cascade involved in plant development, including expression of light- and stress-regulated genes, promotion of cell elongation, normal leaf and chloroplast senescence, and flowering. Binds brassinolide (BL), and less effectively castasterone (CS), but not 2,3,22,23-O-tetramethylbrassinolide or ecdysone. May be involved in a feedback regulation of brassinosteroid biosynthesis. Phosphorylates BRI1-associated receptor kinase 1 (BAK1), Transthyretin-Like protein (TTL) and SERK1 on 'Ser-299' and 'Thr-462' in vitro. May have a guanylyl cyclase activity. Phosphorylates BSK1, BSK2 and BSK3 in vitro. Phosphorylates BSK1, BSK3, BSK5, BSK6, BSK8 and BSK11 in vitro. This is Protein BRASSINOSTEROID INSENSITIVE 1 from Arabidopsis thaliana (Mouse-ear cress).